A 640-amino-acid chain; its full sequence is Kelch-like protein 17 (640 aa).

The segment at 1-50 (MQPRGERPAGRTQSPEHSSPGPGPEAPPPPQPPAPEAERARPRQARPAAP) is disordered. The span at 21–35 (GPGPEAPPPPQPPAP) shows a compositional bias: pro residues. The BTB domain maps to 90 to 157 (CDIVLHVAAK…AYTAEIVVGE (68 aa)). One can recognise a BACK domain in the interval 192–294 (CLGIRGFADT…SRDFLLGHVD (103 aa)). The interval 287–639 (DFLLGHVDAE…SPTLSVSSTS (353 aa)) is interaction with F-actin. Kelch repeat units follow at residues 341 to 387 (VLFA…AVGN), 388 to 434 (RLYA…ALHG), 436 to 481 (LYAA…TLDG), 482 to 528 (NLYA…VLEG), 530 to 575 (LYVA…AMDG), and 576 to 622 (WLYA…VLEL). The segment at 638–640 (TSL) is interaction with PDZK1.

As to quaternary structure, interacts with F-actin; the interaction disrupts the F-actin structures and leads to marked changes of neuronal morphology. Component of a complex, composed of PDZK1, SYNGAP1, KLHL17 and NMDA receptors. Interacts directly with PDZK1 (via PDZ1 domain); the interaction is important for integrity of actin cytoskeleton structures in neurons. Interacts with DLG4 and SYNGAP1. Interacts (via kelch repeats) with GRIK2 (via C-terminus); the interaction targets GRIK2 for degradation via ubiquitin-proteasome pathway. Interacts with GRIK1. Interacts with (via BTB domain) CUL3; the interaction regulates surface GRIK2 expression.

The protein localises to the postsynaptic density. Its subcellular location is the synapse. Its pathway is protein modification; protein ubiquitination. Its function is as follows. Substrate-recognition component of some cullin-RING-based BCR (BTB-CUL3-RBX1) E3 ubiquitin-protein ligase complexes. The BCR(KLHL17) complex mediates the ubiquitination and subsequent degradation of GLUR6. May play a role in the actin-based neuronal function. The sequence is that of Kelch-like protein 17 (Klhl17) from Mus musculus (Mouse).